The following is a 198-amino-acid chain: Recombination protein RecR (198 aa).

The C4-type zinc-finger motif lies at 57 to 72 (CQRCNTFSEAELCAIC). The 96-residue stretch at 80–175 (DQLCIVEMPA…TVTRIARGMP (96 aa)) folds into the Toprim domain.

This sequence belongs to the RecR family.

In terms of biological role, may play a role in DNA repair. It seems to be involved in an RecBC-independent recombinational process of DNA repair. It may act with RecF and RecO. The polypeptide is Recombination protein RecR (Chromobacterium violaceum (strain ATCC 12472 / DSM 30191 / JCM 1249 / CCUG 213 / NBRC 12614 / NCIMB 9131 / NCTC 9757 / MK)).